The chain runs to 329 residues: Interleukin-12 subunit beta (329 aa).

A signal peptide spans 1 to 22 (MCHQWLVLSWFSLVLLASPLMA). The 78-residue stretch at 29–106 (DVYVVELDWY…LSHSHLLLHK (78 aa)) folds into the Ig-like C2-type domain. A disulfide bridge connects residues Cys50 and Cys90. N-linked (GlcNAc...) asparagine glycans are attached at residues Asn125, Asn135, and Asn223. The region spanning 238–329 (PPKNLQLKPL…WSEWASVSCS (92 aa)) is the Fibronectin type-III domain.

It belongs to the IL-12B family. As to quaternary structure, heterodimer with IL12A; disulfide-linked. The heterodimer is known as interleukin IL-12. Heterodimer with IL23A; disulfide-linked. The heterodimer is known as interleukin IL-23. Also secreted as a monomer. Interacts with NBR1; this interaction promotes IL-12 secretion.

Its subcellular location is the secreted. Cytokine that can act as a growth factor for activated T and NK cells, enhance the lytic activity of NK/lymphokine-activated killer cells, and stimulate the production of IFN-gamma by resting PBMC. In terms of biological role, associates with IL23A to form the IL-23 interleukin, a heterodimeric cytokine which functions in innate and adaptive immunity. IL-23 may constitute with IL-17 an acute response to infection in peripheral tissues. IL-23 binds to a heterodimeric receptor complex composed of IL12RB1 and IL23R, activates the Jak-Stat signaling cascade, stimulates memory rather than naive T-cells and promotes production of pro-inflammatory cytokines. IL-23 induces autoimmune inflammation and thus may be responsible for autoimmune inflammatory diseases and may be important for tumorigenesis. This Equus caballus (Horse) protein is Interleukin-12 subunit beta (IL12B).